A 266-amino-acid polypeptide reads, in one-letter code: 4-hydroxy-tetrahydrodipicolinate reductase (266 aa).

NAD(+) is bound by residues 8-13 and glutamate 33; that span reads GAAGRM. Residue arginine 34 coordinates NADP(+). Residues 97–99 and 121–124 contribute to the NAD(+) site; these read GST and APNM. Histidine 154 functions as the Proton donor/acceptor in the catalytic mechanism. (S)-2,3,4,5-tetrahydrodipicolinate is bound at residue histidine 155. Catalysis depends on lysine 158, which acts as the Proton donor. 164-165 contacts (S)-2,3,4,5-tetrahydrodipicolinate; the sequence is GT.

This sequence belongs to the DapB family.

It localises to the cytoplasm. It catalyses the reaction (S)-2,3,4,5-tetrahydrodipicolinate + NAD(+) + H2O = (2S,4S)-4-hydroxy-2,3,4,5-tetrahydrodipicolinate + NADH + H(+). It carries out the reaction (S)-2,3,4,5-tetrahydrodipicolinate + NADP(+) + H2O = (2S,4S)-4-hydroxy-2,3,4,5-tetrahydrodipicolinate + NADPH + H(+). It functions in the pathway amino-acid biosynthesis; L-lysine biosynthesis via DAP pathway; (S)-tetrahydrodipicolinate from L-aspartate: step 4/4. Functionally, catalyzes the conversion of 4-hydroxy-tetrahydrodipicolinate (HTPA) to tetrahydrodipicolinate. The chain is 4-hydroxy-tetrahydrodipicolinate reductase from Geobacter sulfurreducens (strain ATCC 51573 / DSM 12127 / PCA).